The following is a 432-amino-acid chain: Adenylosuccinate synthetase (432 aa).

Residues 13–19 and 41–43 contribute to the GTP site; these read GDEGKGK and GHT. The Proton acceptor role is filled by Asp-14. The Mg(2+) site is built by Asp-14 and Gly-41. IMP contacts are provided by residues 14 to 17, 39 to 42, Thr-130, Arg-144, Gln-225, Thr-240, and Arg-304; these read DEGK and NAGH. His-42 (proton donor) is an active-site residue. 300-306 serves as a coordination point for substrate; sequence ATTGRRR. Residues Arg-306, 332–334, and 415–417 contribute to the GTP site; these read KLD and STG.

This sequence belongs to the adenylosuccinate synthetase family. In terms of assembly, homodimer. Mg(2+) serves as cofactor.

It localises to the cytoplasm. It catalyses the reaction IMP + L-aspartate + GTP = N(6)-(1,2-dicarboxyethyl)-AMP + GDP + phosphate + 2 H(+). The protein operates within purine metabolism; AMP biosynthesis via de novo pathway; AMP from IMP: step 1/2. Functionally, plays an important role in the de novo pathway of purine nucleotide biosynthesis. Catalyzes the first committed step in the biosynthesis of AMP from IMP. The polypeptide is Adenylosuccinate synthetase (Citrobacter koseri (strain ATCC BAA-895 / CDC 4225-83 / SGSC4696)).